The primary structure comprises 239 residues: Orotidine 5'-phosphate decarboxylase (239 aa).

Substrate-binding positions include Asp10, Lys32, 59–68 (DLKLHDIPNT), Thr122, Arg184, Gln193, Gly213, and Arg214. Catalysis depends on Lys61, which acts as the Proton donor.

It belongs to the OMP decarboxylase family. Type 1 subfamily. As to quaternary structure, homodimer.

The catalysed reaction is orotidine 5'-phosphate + H(+) = UMP + CO2. The protein operates within pyrimidine metabolism; UMP biosynthesis via de novo pathway; UMP from orotate: step 2/2. Its function is as follows. Catalyzes the decarboxylation of orotidine 5'-monophosphate (OMP) to uridine 5'-monophosphate (UMP). The sequence is that of Orotidine 5'-phosphate decarboxylase from Geobacillus thermodenitrificans (strain NG80-2).